A 198-amino-acid chain; its full sequence is Recombination protein RecR (198 aa).

The C4-type zinc finger occupies 57–72 (CSVCGHITENDPCYIC). One can recognise a Toprim domain in the interval 80-175 (SVICVVEDDK…KVTRLAQGLS (96 aa)).

This sequence belongs to the RecR family.

Its function is as follows. May play a role in DNA repair. It seems to be involved in an RecBC-independent recombinational process of DNA repair. It may act with RecF and RecO. The polypeptide is Recombination protein RecR (Staphylococcus aureus (strain MRSA252)).